Reading from the N-terminus, the 75-residue chain is uncharacterized protein (75 aa).

This sequence belongs to the HSBP1 family.

This is an uncharacterized protein from Schizosaccharomyces pombe (strain 972 / ATCC 24843) (Fission yeast).